The following is a 1695-amino-acid chain: Helicase swr1 (1695 aa).

Residues 1–10 (MQDGSLNGLS) show a composition bias toward polar residues. A disordered region spans residues 1-229 (MQDGSLNGLS…SHSNVTSTPT (229 aa)). Basic and acidic residues predominate over residues 11–25 (HHNDERVNHENEDKS). Polar residues-rich tracts occupy residues 126-137 (AQRSTVNKNLSG) and 145-156 (SPLSMSVSQSGI). The span at 187–207 (RSPPRQTPSRTRSQSSATSAP) shows a compositional bias: low complexity. The HSA domain maps to 334–408 (PEQQEEPPQQ…EEVRVKRKQL (75 aa)). 2 disordered regions span residues 467 to 738 (SDFL…ASAP) and 772 to 821 (LRQN…LKTP). Positions 499–514 (SETEDEDEVDDDEGLT) are enriched in acidic residues. Residues 538–554 (ASDTSESSDGTRTSHIL) show a composition bias toward polar residues. The span at 572–616 (IELDEVDPMLLDDSEDESTDMDDDMGDSDEDGDADGTDSDDESDD) shows a compositional bias: acidic residues. Basic and acidic residues predominate over residues 626–638 (SKDRVLNDAHRFD). Over residues 656 to 678 (FDDDGQSVSVDEDGDEELEDADE) the composition is skewed to acidic residues. The span at 685-697 (GPSNSVSISQSTA) shows a compositional bias: polar residues. Positions 705-718 (TPDEEPDEQAEVVD) are enriched in acidic residues. Residues 842-1007 (AGLYNNHING…WSLLFFLMPS (166 aa)) form the Helicase ATP-binding domain. Position 855-862 (855-862 (DEMGLGKT)) interacts with ATP. The short motif at 958-961 (DEAH) is the DEAH box element. A Helicase C-terminal domain is found at 1382–1532 (RLDKLLRDLK…DVVIQEGEFT (151 aa)). Disordered regions lie at residues 1590-1625 (AQKE…PQEG) and 1669-1695 (EPLV…KRRR). A compositionally biased stretch (basic residues) spans 1678–1695 (TKKKSKKGKEHRLSKRRR).

The protein belongs to the SNF2/RAD54 helicase family. SWR1 subfamily. As to quaternary structure, component of the SWR1 chromatin-remodeling complex.

Its subcellular location is the nucleus. The enzyme catalyses ATP + H2O = ADP + phosphate + H(+). In terms of biological role, catalytic component of the SWR1 complex which mediates the ATP-dependent exchange of histone H2A for the H2A variant HZT1 leading to transcriptional regulation of selected genes by chromatin remodeling. The sequence is that of Helicase swr1 (swr1) from Aspergillus fumigatus (strain ATCC MYA-4609 / CBS 101355 / FGSC A1100 / Af293) (Neosartorya fumigata).